A 453-amino-acid chain; its full sequence is uncharacterized protein (453 aa).

Topologically, residues Met-1–Pro-110 are cytoplasmic. Residues Ile-111–Ile-131 form a helical membrane-spanning segment. The Lumenal portion of the chain corresponds to Val-132 to Lys-172. A helical transmembrane segment spans residues Phe-173–Ile-193. Residues Gly-194–Ala-201 are Cytoplasmic-facing. Residues Val-202–Val-222 traverse the membrane as a helical segment. Topologically, residues Gly-223–Asn-234 are lumenal. A helical membrane pass occupies residues Ser-235–Thr-255. The Cytoplasmic portion of the chain corresponds to His-256–Ser-269. The chain crosses the membrane as a helical span at residues Leu-270–Ala-290. The Lumenal segment spans residues Lys-291–Lys-332. A helical membrane pass occupies residues Ile-333 to Thr-353. Residues Gly-354–Val-371 are Cytoplasmic-facing. A helical membrane pass occupies residues Ala-372–Ile-392. Residues Gly-393–Ser-413 lie on the Lumenal side of the membrane. A helical membrane pass occupies residues Val-414–Ile-434. Residues Ala-435–Ala-453 are Cytoplasmic-facing.

Belongs to the TPT transporter family.

It localises to the membrane. Its function is as follows. Able to suppress the functional loss of YPT1. May form a channel. Protein SLY41 is not essential for cell viability. The SLY41 gene is a multicopy suppressor. This is an uncharacterized protein from Saccharomyces cerevisiae (strain ATCC 204508 / S288c) (Baker's yeast).